A 186-amino-acid chain; its full sequence is GPI-anchored hemophore ARB_02741 (186 aa).

A signal peptide spans 1–18; it reads MKFSQAVIALAAATVVSA. A CFEM domain is found at 19–108; sequence QLPDVPQCSL…SSKPSEPSTS (90 aa). 4 disulfide bridges follow: Cys-26/Cys-67, Cys-30/Cys-62, Cys-40/Cys-48, and Cys-50/Cys-83. Position 45 (Asp-45) interacts with heme. The interval 89-159 is disordered; the sequence is PVSIPPVEES…NTGVPTQSTP (71 aa). Low complexity predominate over residues 96 to 131; the sequence is EESSSKPSEPSTSEAPTASPTESTPAPTTPAPTGTG. The span at 132-144 shows a compositional bias: gly residues; sequence SPSGTGAPGGPSG. Residues 148-159 are compositionally biased toward polar residues; the sequence is FTNTGVPTQSTP. The GPI-anchor amidated glycine moiety is linked to residue Gly-163. The propeptide at 164–186 is removed in mature form; sequence AASGLSANIGGMGAAILAIAAYL.

It belongs to the RBT5 family. Post-translationally, the GPI-anchor is attached to the protein in the endoplasmic reticulum and serves to target the protein to the cell surface. There, the glucosamine-inositol phospholipid moiety is cleaved off and the GPI-modified mannoprotein is covalently attached via its lipidless GPI glycan remnant to the 1,6-beta-glucan of the outer cell wall layer.

The protein resides in the secreted. Its subcellular location is the cell wall. The protein localises to the cell membrane. In terms of biological role, GPI-anchored cell wall protein involved in stabilizing the cell wall. This Arthroderma benhamiae (strain ATCC MYA-4681 / CBS 112371) (Trichophyton mentagrophytes) protein is GPI-anchored hemophore ARB_02741.